Reading from the N-terminus, the 810-residue chain is Exocyst complex component 6B (810 aa).

Positions 79-118 (TELLKVRGEAQKLKNQVTDTNRKLQHEGKELVIAMEELKQ) form a coiled coil. Residues 258–282 (ESTSPKSEQDSGILDVEDEEDDEEV) are disordered. Residues 272–282 (DVEDEEDDEEV) are compositionally biased toward acidic residues.

The protein belongs to the SEC15 family. As to quaternary structure, the exocyst complex is composed of SEC3, SEC5, SEC6, SEC8, SEC10, SEC15, EXO70 and EXO84.

Functionally, component of the exocyst complex involved in the docking of exocytic vesicles with fusion sites on the plasma membrane. This Mus musculus (Mouse) protein is Exocyst complex component 6B (Exoc6b).